A 154-amino-acid chain; its full sequence is Troponin C, isoallergen Bla g 6.0301 (154 aa).

4 EF-hand domains span residues 11 to 46 (EQIS…MGQP), 47 to 82 (FNRR…FIIE), 87 to 122 (AMEK…LDEQ), and 123 to 154 (LTSD…MMTG). Residues Asp-60, Asp-62, Ser-64, Arg-66, and Glu-71 each coordinate Ca(2+). Asp-136, Asp-138, Ser-140, Thr-142, and Glu-147 together coordinate Ca(2+).

Belongs to the troponin C family.

Functionally, troponin is the central regulatory protein of striated muscle contraction. It consists of three components: Troponin-I (Tn-I) which is the inhibitor of actomyosin ATPase, Troponin-T (Tn-T) which contains the binding site for tropomyosin and Troponin-C (Tn-C). The binding of calcium to Tn-C abolishes the inhibitory action of Tn on actin filaments. This chain is Troponin C, isoallergen Bla g 6.0301, found in Blattella germanica (German cockroach).